The chain runs to 199 residues: V-set and transmembrane domain-containing protein 5 (199 aa).

An N-terminal signal peptide occupies residues 1–27; that stretch reads MRPPRCVGRTQGIPLGLLAFWVATARC. Residues 28–146 are Extracellular-facing; that stretch reads LQSQGVSLYI…VSEIRYEDLH (119 aa). The region spanning 36-138 is the Ig-like C2-type domain; the sequence is YIPRSAINAT…QSGTILLHVS (103 aa). 3 N-linked (GlcNAc...) asparagine glycosylation sites follow: N43, N87, and N101. Residues 147 to 167 traverse the membrane as a helical segment; it reads FVAVFFALLAAVAVVLISLMW. The Cytoplasmic portion of the chain corresponds to 168–199; it reads VCNQCAYKFQRKRRYKLRESTTEEIEMKDVEC. Residues 169-185 are important for CDC42-dependent filopodia induction; sequence CNQCAYKFQRKRRYKLR.

As to quaternary structure, can homooligomerize through cis interactions within the same cell membrane. In terms of processing, N-glycosylated.

The protein localises to the cell membrane. Its subcellular location is the cell projection. The protein resides in the dendrite. It is found in the axon. Cell adhesion-like membrane protein of the central nervous system (CNS) which modulates both the position and complexity of central neurons by altering their membrane morphology and dynamics. Involved in the formation of neuronal dendrites and protrusions including dendritic filopodia. In synaptogenesis, regulates synapse formation by altering dendritic spine morphology and actin distribution. Promotes formation of unstable neuronal spines such as thin and branched types. Regulates neuronal morphogenesis and migration during cortical development in the brain. The sequence is that of V-set and transmembrane domain-containing protein 5 (Vstm5) from Rattus norvegicus (Rat).